Here is a 513-residue protein sequence, read N- to C-terminus: Xylose import ATP-binding protein XylG (513 aa).

2 ABC transporter domains span residues 5-242 and 259-505; these read LEMK…VGRE and LRIE…LRSE. ATP is bound at residue 37-44; sequence GENGSGKS.

This sequence belongs to the ABC transporter superfamily. Xylose importer (TC 3.A.1.2.4) family. In terms of assembly, the complex is composed of two ATP-binding proteins (XylG), two transmembrane proteins (XylH) and a solute-binding protein (XylF).

Its subcellular location is the cell inner membrane. It catalyses the reaction D-xylose(out) + ATP + H2O = D-xylose(in) + ADP + phosphate + H(+). Part of the ABC transporter complex XylFGH involved in xylose import. Responsible for energy coupling to the transport system. This is Xylose import ATP-binding protein XylG from Shigella boydii serotype 4 (strain Sb227).